The chain runs to 489 residues: Glutamate--tRNA ligase (489 aa).

A 'HIGH' region motif is present at residues P11–G21. A 'KMSKS' region motif is present at residues K253–R257. Residue K256 coordinates ATP.

Belongs to the class-I aminoacyl-tRNA synthetase family. Glutamate--tRNA ligase type 1 subfamily. Monomer.

It localises to the cytoplasm. It carries out the reaction tRNA(Glu) + L-glutamate + ATP = L-glutamyl-tRNA(Glu) + AMP + diphosphate. Catalyzes the attachment of glutamate to tRNA(Glu) in a two-step reaction: glutamate is first activated by ATP to form Glu-AMP and then transferred to the acceptor end of tRNA(Glu). This Geobacillus stearothermophilus (Bacillus stearothermophilus) protein is Glutamate--tRNA ligase.